The following is a 1111-amino-acid chain: Cell death abnormality protein 1 (1111 aa).

Residues 1 to 18 form the signal peptide; sequence MRLILLVLLATWQVVVDT. The Extracellular portion of the chain corresponds to 19–910; it reads RAPTFPDKLT…NGAGRSTGLT (892 aa). Residues 41–113 enclose the EMI domain; that stretch reads GDHVCTVKTI…QCCDGYYQTK (73 aa). Disulfide bonds link cysteine 45–cysteine 106, cysteine 71–cysteine 80, cysteine 105–cysteine 117, cysteine 121–cysteine 130, cysteine 125–cysteine 136, cysteine 138–cysteine 147, cysteine 160–cysteine 172, cysteine 166–cysteine 179, cysteine 181–cysteine 190, cysteine 203–cysteine 215, cysteine 209–cysteine 221, cysteine 223–cysteine 232, cysteine 245–cysteine 257, cysteine 251–cysteine 264, and cysteine 266–cysteine 275. Asparagine 66 is a glycosylation site (N-linked (GlcNAc...) asparagine). 4 consecutive EGF-like domains span residues 118 to 148, 156 to 191, 199 to 233, and 241 to 276; these read LPDC…KYCA, WGLG…ERCE, WGPN…EFCL, and FGAE…ALCE. N-linked (GlcNAc...) asparagine glycosylation is found at asparagine 333 and asparagine 345. One can recognise an EGF-like 5 domain in the interval 421 to 458; the sequence is YGPNCEKQAMCDWNHASECNPETGSCVCKPGRTGKNCS. Disulfide bonds link cysteine 425–cysteine 439, cysteine 431–cysteine 446, and cysteine 448–cysteine 457. The N-linked (GlcNAc...) asparagine glycan is linked to asparagine 456. The stretch at 629–680 is one FU repeat; it reads DQKCDPNTFGFLCQETVTPSPCASTDPKNGVCLSCPPGSSGIHCEHNCPAGS. An EGF-like 6 domain is found at 681–716; that stretch reads YGDGCQQVCSCADGHGCDPTTGECICEPGYHGKTCS. Intrachain disulfides connect cysteine 685–cysteine 697, cysteine 691–cysteine 704, and cysteine 706–cysteine 715. A helical transmembrane segment spans residues 911 to 931; the sequence is WFFVLLIVALCGGLGLIALFY. The segment at 931-1007 is interaction with trim-21; that stretch reads YRNKYQKEKD…EEELENKKIH (77 aa). The Cytoplasmic portion of the chain corresponds to 932-1111; the sequence is RNKYQKEKDP…KKRAQDNLYT (180 aa). Disordered stretches follow at residues 940 to 993 and 1006 to 1111; these read DPDM…PNGL and IHGR…NLYT. Positions 962 to 965 match the NPXY motif; that stretch reads NPLY. The segment covering 963–980 has biased composition (polar residues); it reads PLYSRQSVFPDSDAFSSE. Tyrosine 1019 is subject to Phosphotyrosine; by SRC. Positions 1019–1022 match the YXXL motif; sequence YASL. A compositionally biased stretch (low complexity) spans 1030-1039; sequence SSSSASASAS. The span at 1068 to 1083 shows a compositional bias: polar residues; sequence NSISPAHAVTTSNHNE.

In terms of assembly, interacts (via C-terminus) with ced-6 (via PTB domain). Interacts with nck-1; the interaction is required for ced-1 degradation through the proteasome pathway. Interacts with V-ATPase vha-10. Phosphorylation of Tyr-1019, within the YXXL motif, by src-1 is thought to initiate phagosomal formation. Post-translationally, 'Lys-48'-linked polyubiquitination by trim-21 leads to proteasomal degradation. Expressed in engulfing cells and syncytium hypodermal cells. Ced-7 is necessary for clustering around cell corpses prior to engulfment.

It is found in the cell membrane. It localises to the cytoplasmic vesicle. The protein localises to the phagosome membrane. Involved in programmed cell death, also called apoptosis, in both somatic and germ cells. Acts by recruiting ced-6 to phagosomes which enables actin-dependent cytoskeletal reorganization and subsequent engulfment of the apoptotic cell corpse. Has a role in the association of ppk-3 and rab-7 with the phagosomal surface which is necessary for the incorporation of lysosomes to phagosomes during phagosome maturation. Activates the expression of unfolded protein response genes, which are involved in the immune response to live bacteria. The polypeptide is Cell death abnormality protein 1 (Caenorhabditis elegans).